Consider the following 128-residue polypeptide: Small ribosomal subunit protein uS11 (128 aa).

The protein belongs to the universal ribosomal protein uS11 family. As to quaternary structure, part of the 30S ribosomal subunit. Interacts with proteins S7 and S18. Binds to IF-3.

Located on the platform of the 30S subunit, it bridges several disparate RNA helices of the 16S rRNA. Forms part of the Shine-Dalgarno cleft in the 70S ribosome. The polypeptide is Small ribosomal subunit protein uS11 (Synechococcus sp. (strain JA-3-3Ab) (Cyanobacteria bacterium Yellowstone A-Prime)).